The sequence spans 225 residues: KDP operon transcriptional regulatory protein KdpE (225 aa).

The 114-residue stretch at 3–116 folds into the Response regulatory domain; it reads NVLIVEDEQA…ELQARLRVAL (114 aa). The residue at position 52 (Asp52) is a 4-aspartylphosphate. The segment at residues 126–225 is a DNA-binding region (ompR/PhoB-type); the sequence is DPLVKFSDVT…ETGIGYRFML (100 aa).

In terms of processing, phosphorylated by KdpD.

The protein localises to the cytoplasm. In terms of biological role, member of the two-component regulatory system KdpD/KdpE involved in the regulation of the kdp operon. This chain is KDP operon transcriptional regulatory protein KdpE (kdpE), found in Escherichia coli (strain K12).